The sequence spans 495 residues: MSCLLNNMVLMGLALLVCGVQAFFLPNTTSLEKLLSKYQHAEPHSRVRRAIPMSDRQEILMLHNKLRGQVYPPASNMEHMTWDEELERSAAAWAHRCLWEHGPAGLLRSIGQNLAVHWGRYRSPGFHVQSWYDEVKDYTYPYPHECTPRCRERCSGPMCTHYTQMVWATTNKIGCAVHTCRNMNVWGDTWENAVYLVCNYSPKGNWIGEAPYKHGRPCSECPSSYGGGCLNNLCHRAEKPHKHKPEVDMMNEVESPPAPEETHVWVQPRVIKTKKTPVINFMTQVVHCDTKMKDSCKGSTCNRYQCPAGCLSNKAKVFGSLFYESSSSICRAAIHYGVIDDRGGLVDVTRNGMVPFFVKSQKNGMESLSKYKPSSSFTVSKVTETAVDCHATVAQLCPFEKPATHCPRIQCPARCGEEPSYWAPVYGTNIYADTSSICKAAVHAGVIVDEVGGYADVMPVDKKKSYVGSLRNGVQSESLNTPQNGNAFRIFAVRQ.

The first 22 residues, methionine 1–alanine 22, serve as a signal peptide directing secretion. An N-linked (GlcNAc...) asparagine glycan is attached at asparagine 27. In terms of domain architecture, SCP spans leucine 60–tyrosine 200. LCCL domains lie at methionine 282–phenylalanine 377 and threonine 383–asparagine 486. Cystine bridges form between cysteine 288–cysteine 306, cysteine 310–cysteine 330, cysteine 389–cysteine 411, and cysteine 415–cysteine 438.

Binds to heparin, dermatan sulfate and chondroitin sulfate. In terms of tissue distribution, present in kidney renal tubules (at protein level).

The protein localises to the secreted. In terms of biological role, promotes matrix assembly. In Mus musculus (Mouse), this protein is Cysteine-rich secretory protein LCCL domain-containing 2 (Crispld2).